A 612-amino-acid polypeptide reads, in one-letter code: tRNA(Met) cytidine acetyltransferase TmcA (612 aa).

ATP-binding positions include Q136, 161 to 170 (GRGKSTLLGQ), and R284. Positions 319–499 (KHASELEEAL…PAAIYALPLT (181 aa)) constitute an N-acetyltransferase domain. Residue 424–426 (IAV) coordinates acetyl-CoA.

This sequence belongs to the RNA cytidine acetyltransferase family. TmcA subfamily.

The protein localises to the cytoplasm. It carries out the reaction cytidine(34) in elongator tRNA(Met) + acetyl-CoA + ATP + H2O = N(4)-acetylcytidine(34) in elongator tRNA(Met) + ADP + phosphate + CoA + H(+). Catalyzes the formation of N(4)-acetylcytidine (ac(4)C) at the wobble position of tRNA(Met), by using acetyl-CoA as an acetyl donor and ATP (or GTP). The protein is tRNA(Met) cytidine acetyltransferase TmcA of Idiomarina loihiensis (strain ATCC BAA-735 / DSM 15497 / L2-TR).